Here is a 355-residue protein sequence, read N- to C-terminus: MEELRVELKDKKYPIYIGYDILKKFLKNYRDNYSFSFIITHSFLYDLYKEDLEISQEGIIYVPVGEKSKSFKEVIRISRELAQRGADRKSAIFAFGGGVIGDLTGFVASIYMRGIRYIQIPTTLLAQVDSSIGGKTGINIKEGKNLIGTFYHPDAVIIDIKTLNTLPEREYRSGIAEVIKYGMIMNQSLFNFLEKNTTSILNKDIDILSHIIRESLICKKYVVEKDEKESSLRMILNFGHTFGHAIEAKGGYKRFLHGEAVAIGMFLATYLAYKIGFCDYSVLKRLQDTLLSFGFDLNNPYRIEDLVGYIKRDKKAYGGKIRLILPKEIGKVEIVENLEEKDIIKALKAGDGYGK.

NAD(+)-binding positions include 98-102 (GVIGD), 122-123 (TT), lysine 135, lysine 144, and 162-165 (TLNT). Zn(2+) is bound by residues glutamate 177, histidine 240, and histidine 257.

This sequence belongs to the sugar phosphate cyclases superfamily. Dehydroquinate synthase family. Co(2+) serves as cofactor. Requires Zn(2+) as cofactor. The cofactor is NAD(+).

The protein resides in the cytoplasm. The catalysed reaction is 7-phospho-2-dehydro-3-deoxy-D-arabino-heptonate = 3-dehydroquinate + phosphate. Its pathway is metabolic intermediate biosynthesis; chorismate biosynthesis; chorismate from D-erythrose 4-phosphate and phosphoenolpyruvate: step 2/7. Catalyzes the conversion of 3-deoxy-D-arabino-heptulosonate 7-phosphate (DAHP) to dehydroquinate (DHQ). The chain is 3-dehydroquinate synthase from Dictyoglomus thermophilum (strain ATCC 35947 / DSM 3960 / H-6-12).